The following is a 270-amino-acid chain: MISFPNAKINLGLSVLSKRPDGYHNIETCFYPIPWNDMLEIIPAKETVFTSSGNNIPGTSASNLCLKTYTLLKEKYPLSPVHIHLHKRIPIGAGLGGGSSDAAFTCKLLNDVFALKLSAAEMEDIVRPVGSDCAFFIENTSILAHEKGDYFSHPGIVNLSGKWIYLIHPGIHVATKEAYDGVVPNTDRKPIGDILKQPLSVWKAELVNDFERSVFEKYPAIKTLKEQMYKQGAAYAAMSGSGSTVFGIFNTKPETFHENTSNIQSCIAPL.

The active site involves Lys8. 90-100 (PIGAGLGGGSS) is an ATP binding site. Asp132 is a catalytic residue.

It belongs to the GHMP kinase family. IspE subfamily.

The catalysed reaction is 4-CDP-2-C-methyl-D-erythritol + ATP = 4-CDP-2-C-methyl-D-erythritol 2-phosphate + ADP + H(+). Its pathway is isoprenoid biosynthesis; isopentenyl diphosphate biosynthesis via DXP pathway; isopentenyl diphosphate from 1-deoxy-D-xylulose 5-phosphate: step 3/6. In terms of biological role, catalyzes the phosphorylation of the position 2 hydroxy group of 4-diphosphocytidyl-2C-methyl-D-erythritol. The chain is 4-diphosphocytidyl-2-C-methyl-D-erythritol kinase from Cytophaga hutchinsonii (strain ATCC 33406 / DSM 1761 / CIP 103989 / NBRC 15051 / NCIMB 9469 / D465).